The sequence spans 339 residues: Uroporphyrinogen decarboxylase (339 aa).

Substrate-binding positions include 21 to 25, aspartate 71, tyrosine 146, serine 201, and histidine 316; that span reads RQAGR.

This sequence belongs to the uroporphyrinogen decarboxylase family. As to quaternary structure, homodimer.

The protein resides in the cytoplasm. The catalysed reaction is uroporphyrinogen III + 4 H(+) = coproporphyrinogen III + 4 CO2. The protein operates within porphyrin-containing compound metabolism; protoporphyrin-IX biosynthesis; coproporphyrinogen-III from 5-aminolevulinate: step 4/4. Its function is as follows. Catalyzes the decarboxylation of four acetate groups of uroporphyrinogen-III to yield coproporphyrinogen-III. This chain is Uroporphyrinogen decarboxylase, found in Rickettsia canadensis (strain McKiel).